The primary structure comprises 715 residues: Ribosomal RNA large subunit methyltransferase K/L (715 aa).

The region spanning 43 to 154 (TQYRALLWSR…RDDLVLSLDL (112 aa)) is the THUMP domain.

The protein belongs to the methyltransferase superfamily. RlmKL family.

It is found in the cytoplasm. The catalysed reaction is guanosine(2445) in 23S rRNA + S-adenosyl-L-methionine = N(2)-methylguanosine(2445) in 23S rRNA + S-adenosyl-L-homocysteine + H(+). The enzyme catalyses guanosine(2069) in 23S rRNA + S-adenosyl-L-methionine = N(2)-methylguanosine(2069) in 23S rRNA + S-adenosyl-L-homocysteine + H(+). Functionally, specifically methylates the guanine in position 2445 (m2G2445) and the guanine in position 2069 (m7G2069) of 23S rRNA. The protein is Ribosomal RNA large subunit methyltransferase K/L of Mannheimia succiniciproducens (strain KCTC 0769BP / MBEL55E).